A 189-amino-acid polypeptide reads, in one-letter code: MLLSDRDIRAELSAGRLGIDPFDDSMVQPSSVDVRLDSLFRVFNNTRYTHIDPAQRQDELTTLVEPAEGEPFVLHPGEFVLGSTLEVCSLPDDLAGRLEGKSSLGRLGLLTHSTAGFIDPGFNGHITLELSNVANLPITLWPGMKIGQLCLLRLSSAAEHPYGSSAVGSKYQGQRGPTPSKAYLNFAQR.

DCTP-binding positions include 101-106 (KSSLGR), D119, 127-129 (TLE), Q148, Y162, and Q174. The Proton donor/acceptor role is filled by E129.

It belongs to the dCTP deaminase family. Homotrimer.

It catalyses the reaction dCTP + 2 H2O = dUMP + NH4(+) + diphosphate. The protein operates within pyrimidine metabolism; dUMP biosynthesis; dUMP from dCTP: step 1/1. Functionally, bifunctional enzyme that catalyzes both the deamination of dCTP to dUTP and the hydrolysis of dUTP to dUMP without releasing the toxic dUTP intermediate. In Rhodococcus opacus (strain B4), this protein is dCTP deaminase, dUMP-forming.